The primary structure comprises 261 residues: MFEARLVQGSILKKVLEALKDLINEACWDISSSGVNLQSMDSSHVSLVQLTLRSEGFDTYRCDRNLAMGVNLTSMSKILKCAGNEDIITLRAEDNADTLALVFEAPNQEKVSDYEMKLMDLDVEQLGIPEQEYSCVVKMPSGEFARICRDLSHIGDAVVISCAKDGVKFSASGELGNGNIKLSQTSNVDKEEEAVAIEMNEPVQLTFALRYLNFFTKATPLSPTVTLSMSADVPLVVEYKIADMGHLKYYLAPKIEDEEGS.

An N6-acetyllysine mark is found at K14, K77, and K80. The DNA-binding element occupies 61-80; sequence RCDRNLAMGVNLTSMSKILK. C135 and C162 form a disulfide bridge. K164 participates in a covalent cross-link: Glycyl lysine isopeptide (Lys-Gly) (interchain with G-Cter in SUMO2); alternate. A Glycyl lysine isopeptide (Lys-Gly) (interchain with G-Cter in ubiquitin); alternate cross-link involves residue K164. A Phosphotyrosine; by EGFR modification is found at Y211. An N6-acetyllysine modification is found at K248. K254 is covalently cross-linked (Glycyl lysine isopeptide (Lys-Gly) (interchain with G-Cter in SUMO2)).

The protein belongs to the PCNA family. Homotrimer. Interacts with p300/EP300; the interaction occurs on chromatin in UV-irradiated damaged cells. Interacts with CREBBP (via transactivation domain and C-terminus); the interaction occurs on chromatin in UV-irradiated damaged cells. Directly interacts with POLD1, POLD3 and POLD4 subunits of the DNA polymerase delta complex, POLD3 being the major interacting partner; the interaction with POLD3 is inhibited by CDKN1A/p21(CIP1). Forms a complex with activator 1 heteropentamer in the presence of ATP. Interacts with EXO1, POLH, POLK, DNMT1, ERCC5, FEN1, CDC6 and POLDIP2. Interacts with POLB. Interacts with APEX2; this interaction is triggered by reactive oxygen species and increased by misincorporation of uracil in nuclear DNA. Forms a ternary complex with DNTTIP2 and core histone. Interacts with KCTD10 and PPP1R15A. Interacts with SMARCA5/SNF2H. Interacts with BAZ1B/WSTF; the interaction is direct and is required for BAZ1B/WSTF binding to replication foci during S phase. Interacts with HLTF and SHPRH. Interacts with NUDT15; this interaction is disrupted in response to UV irradiation and acetylation. Interacts with CDKN1A/p21(CIP1) and CDT1; interacts via their PIP-box which also recruits the DCX(DTL) complex. The interaction with CDKN1A inhibits POLD3 binding. Interacts with DDX11. Interacts with EGFR; positively regulates PCNA. Interacts with PARPBP. Interacts (when ubiquitinated) with SPRTN; leading to enhance RAD18-mediated PCNA ubiquitination. Interacts (when polyubiquitinated) with ZRANB3. Interacts with SMARCAD1. Interacts with CDKN1C. Interacts with PCLAF (via PIP-box). Interacts with RTEL1 (via PIP-box); the interaction is direct and essential for the suppression of telomere fragility. Interacts with FAM111A (via PIP-box); the interaction is direct and required for PCNA loading on chromatin binding. Interacts with LIG1. Interacts with SETMAR. Interacts with ANKRD17. Interacts with FBXO18/FBH1 (via PIP-box); the interaction recruits the DCX(DTL) complex and promotes ubiquitination and degradation of FBXO18/FBH1. Interacts with POLN. Interacts with SDE2 (via PIP-box); the interaction is direct and prevents ultraviolet light induced monoubiquitination. Component of the replisome complex composed of at least DONSON, MCM2, MCM7, PCNA and TICRR; interaction at least with PCNA occurs during DNA replication. Interacts with MAPK15; the interaction is chromatin binding dependent and prevents MDM2-mediated PCNA destruction by inhibiting the association of PCNA with MDM2. Interacts with PARP10 (via PIP-box). Interacts with DDI2. Interacts with HMCES (via PIP-box). Interacts with TRAIP (via PIP-box). Interacts with UHRF2. Interacts with ALKBH2; this interaction is enhanced during the S-phase of the cell cycle. Interacts with ATAD5; the interaction promotes USP1-mediated PCNA deubiquitination. Interacts (when phosphorylated) with GRB2. Interacts with nuclear UNG; this interaction mediates UNG recruitment to S-phase replication foci. Interacts with ERCC6L2 (via an atypical PIP-box); this interaction facilitates cenrtomeric localization of ERCC6L2. Post-translationally, phosphorylated. Phosphorylation at Tyr-211 by EGFR stabilizes chromatin-associated PCNA. In terms of processing, acetylated by CREBBP and p300/EP300; preferentially acetylated by CREBBP on Lys-80, Lys-13 and Lys-14 and on Lys-77 by p300/EP300 upon loading on chromatin in response to UV irradiation. Lysine acetylation disrupts association with chromatin, hence promoting PCNA ubiquitination and proteasomal degradation in response to UV damage in a CREBBP- and EP300-dependent manner. Acetylation disrupts interaction with NUDT15 and promotes degradation. Ubiquitinated. Following DNA damage, can be either monoubiquitinated to stimulate direct bypass of DNA lesions by specialized DNA polymerases or polyubiquitinated to promote recombination-dependent DNA synthesis across DNA lesions by template switching mechanisms. Following induction of replication stress, monoubiquitinated by the UBE2B-RAD18 complex on Lys-164, leading to recruit translesion (TLS) polymerases, which are able to synthesize across DNA lesions in a potentially error-prone manner. An error-free pathway also exists and requires non-canonical polyubiquitination on Lys-164 through 'Lys-63' linkage of ubiquitin moieties by the E2 complex UBE2N-UBE2V2 and the E3 ligases, HLTF, RNF8 and SHPRH. This error-free pathway, also known as template switching, employs recombination mechanisms to synthesize across the lesion, using as a template the undamaged, newly synthesized strand of the sister chromatid. Monoubiquitination at Lys-164 also takes place in undamaged proliferating cells, and is mediated by the DCX(DTL) complex, leading to enhance PCNA-dependent translesion DNA synthesis. Sumoylated during S phase. Post-translationally, methylated on glutamate residues by ARMT1.

It is found in the nucleus. Its function is as follows. Auxiliary protein of DNA polymerase delta and epsilon, is involved in the control of eukaryotic DNA replication by increasing the polymerase's processibility during elongation of the leading strand. Induces a robust stimulatory effect on the 3'-5' exonuclease and 3'-phosphodiesterase, but not apurinic-apyrimidinic (AP) endonuclease, APEX2 activities. Has to be loaded onto DNA in order to be able to stimulate APEX2. Plays a key role in DNA damage response (DDR) by being conveniently positioned at the replication fork to coordinate DNA replication with DNA repair and DNA damage tolerance pathways. Acts as a loading platform to recruit DDR proteins that allow completion of DNA replication after DNA damage and promote postreplication repair: Monoubiquitinated PCNA leads to recruitment of translesion (TLS) polymerases, while 'Lys-63'-linked polyubiquitination of PCNA is involved in error-free pathway and employs recombination mechanisms to synthesize across the lesion. In Bos taurus (Bovine), this protein is Proliferating cell nuclear antigen (PCNA).